Consider the following 319-residue polypeptide: Selection and upkeep of intraepithelial T-cells protein 9 (319 aa).

The signal sequence occupies residues 1–26 (MESSASCLPGFFMSFLLLQNTVLTQA). The Ig-like V-type domain maps to 27–117 (MRSDIKINIQ…TNQEKKRSIV (91 aa)). The Extracellular segment spans residues 27 to 139 (MRSDIKINIQ…LMSNKFSCPS (113 aa)). An intrachain disulfide couples Cys-47 to Cys-101. Asn-105 carries N-linked (GlcNAc...) asparagine glycosylation. Residues 140–160 (IYLITIIFLNFLRGILVFCCL) form a helical membrane-spanning segment. At 161 to 183 (RRKPVCFRNLMSTVMEALYSKMG) the chain is on the cytoplasmic side. Residues 184-204 (VCCLLIWECLLLVLYIAFLPI) traverse the membrane as a helical segment. Over 205-228 (YVSFRSRAFLLDDTYPLYTNWLWN) the chain is Extracellular. The helical transmembrane segment at 229–249 (ICIILTVIMVLFPGLILCLLW) threads the bilayer. The Cytoplasmic segment spans residues 250 to 319 (TLNCYGQVSS…DDTASTLFIS (70 aa)).

It belongs to the SKINT family. Expressed in skin, thymus and testis.

Its subcellular location is the membrane. In terms of biological role, may act by engaging a cell surface molecule on immature T-cells in the embryonic thymus. In Mus musculus (Mouse), this protein is Selection and upkeep of intraepithelial T-cells protein 9 (Skint9).